A 1351-amino-acid chain; its full sequence is Transcriptional regulator ovo (1351 aa).

A required for Ubr3 binding and tal-dependent proteolytic processing region spans residues 1-31 (MPKIFLIKNRLHQQQQRLLESQNLLQHKNQD). Disordered stretches follow at residues 22-77 (QNLL…SDQQ), 100-119 (LDHL…NPNQ), 184-397 (NSPI…SDEE), 447-554 (AGHG…HFNA), 640-665 (SNSK…GQTS), 778-807 (DDEE…PVEQ), 834-887 (GSNQ…YQHA), 916-1000 (LLSQ…PSPT), 1023-1044 (PMSS…GSSN), and 1113-1192 (SKHG…DSSS). Over residues 49 to 60 (SPTPTSQPPPEP) the composition is skewed to pro residues. 2 stretches are compositionally biased toward low complexity: residues 61-72 (QGQGQQVLGQVP) and 104-119 (NQNQ…NPNQ). Residues 205–232 (EKEKPAEREREKSDERTEQVEKEERVER) show a composition bias toward basic and acidic residues. Residues 233–242 (EEEEDDEVDV) show a composition bias toward acidic residues. A compositionally biased stretch (basic and acidic residues) spans 262-272 (QRKEYPQEPKD). The span at 324–340 (TPPPADQRPSPPPPRDP) shows a compositional bias: pro residues. Low complexity predominate over residues 447-486 (AGHGRNSSSSSGAAGQGFQSSGFGSQNSGSGSSSGNQNAG). Positions 487–505 (SGAGSPGSGAGGGGGMGGG) are enriched in gly residues. The segment covering 530 to 552 (KSGQQSTASNNTGQSPGANHSHF) has biased composition (polar residues). The span at 644–653 (FHNHHHHHQH) shows a compositional bias: basic residues. The span at 793-807 (STPSLTPDSVTPVEQ) shows a compositional bias: polar residues. 5 stretches are compositionally biased toward low complexity: residues 835 to 878 (SNQQ…HVQQ), 916 to 962 (LLSQ…QQQQ), 970 to 979 (QQQQQPQPQS), 1025 to 1044 (SSSS…GSSN), and 1121 to 1175 (HQQQ…HGSA). C2H2-type zinc fingers lie at residues 1197–1219 (FVCR…MKCH), 1225–1247 (YLCT…TRTH), 1253–1276 (YKCN…QKVH), and 1292–1315 (YVCE…KNNH).

Interacts (via N-terminus) with Ubr3; the interaction is mediated by tal. Post-translationally, N-terminus is proteolytically cleaved and ubiquitinated via a tal-dependent mechanism, leading to the proteolytic degradation of the N-terminus and the production of transcriptional activator shavenbaby, a truncated form with transcriptional activator activity.

It localises to the cytoplasm. It is found in the nucleus. The protein localises to the nucleoplasm. Functionally, transcriptional regulator with essential functions in the germline and soma. Plays an essential role in regulating the formation of apical cell extensions such as denticles and aristae, and initiating cytoskeletal remodeling during epidermal differentiation. Its function is as follows. Transcriptional repressor which functions in postembryonic development. The full-length unprocessed form acts as a transcriptional repressor (Transcriptional repressor svb). In terms of biological role, transcriptional activator which initiates trichome development and also promotes tarsal joint development. Has an essential somatic role regulating the tal-dependent formation of trichomes, and initiating cytoskeletal remodeling during epidermal differentiation. Function with SoxN is required for correct denticle morphogenesis on the embryonic epidermis. SoxN and svb appear to act both independently and in conjunction with each other to activate certain genes involved in denticle morphogenesis; Svb appears to be involved in regulating denticle length whereas SoxN regulates the denticle base circumference. Also functions in the development of other apical cell extensions such as bristles. Also has an important role in tarsal joint development, repressing expression of the N ligand Dl and defining its signaling boundary. Transcriptional repressor which is specifically involved in female germline development, where it functions antagonistically to isoform D. Negatively regulates expression of otu and may also have autoregulatory activity. Negatively regulates expression of piwi in the primordial germ cells (PGCs). Functionally, transcriptional activator which is specifically involved in female germline development, where it functions antagonistically to isoform C. Necessary and sufficient for normal oogenesis. Required in the primordial germ cells (PGCs) for normal development of male and female germline cells. Plays a role in germline sex determination. Binds the promoter DNA and positively regulates the transcription of the otu gene in a stage-specific manner. May have autoregulatory activity. The sequence is that of Transcriptional regulator ovo from Drosophila melanogaster (Fruit fly).